The sequence spans 371 residues: Carbamoyl phosphate synthase small chain (371 aa).

Residues methionine 1 to valine 186 form a CPSase region. L-glutamine contacts are provided by serine 52, glycine 233, and glycine 235. The 187-residue stretch at valine 185–alanine 371 folds into the Glutamine amidotransferase type-1 domain. Cysteine 261 acts as the Nucleophile in catalysis. The L-glutamine site is built by leucine 262, glutamine 265, asparagine 303, glycine 305, and tyrosine 306. Active-site residues include histidine 346 and glutamate 348.

It belongs to the CarA family. Composed of two chains; the small (or glutamine) chain promotes the hydrolysis of glutamine to ammonia, which is used by the large (or ammonia) chain to synthesize carbamoyl phosphate. Tetramer of heterodimers (alpha,beta)4.

It carries out the reaction hydrogencarbonate + L-glutamine + 2 ATP + H2O = carbamoyl phosphate + L-glutamate + 2 ADP + phosphate + 2 H(+). The catalysed reaction is L-glutamine + H2O = L-glutamate + NH4(+). It participates in amino-acid biosynthesis; L-arginine biosynthesis; carbamoyl phosphate from bicarbonate: step 1/1. Its pathway is pyrimidine metabolism; UMP biosynthesis via de novo pathway; (S)-dihydroorotate from bicarbonate: step 1/3. Its function is as follows. Small subunit of the glutamine-dependent carbamoyl phosphate synthetase (CPSase). CPSase catalyzes the formation of carbamoyl phosphate from the ammonia moiety of glutamine, carbonate, and phosphate donated by ATP, constituting the first step of 2 biosynthetic pathways, one leading to arginine and/or urea and the other to pyrimidine nucleotides. The small subunit (glutamine amidotransferase) binds and cleaves glutamine to supply the large subunit with the substrate ammonia. This is Carbamoyl phosphate synthase small chain from Sulfolobus acidocaldarius (strain ATCC 33909 / DSM 639 / JCM 8929 / NBRC 15157 / NCIMB 11770).